Here is a 1207-residue protein sequence, read N- to C-terminus: Disease resistance protein RPP2B (1207 aa).

The TIR domain occupies 15–180; that stretch reads CEFDVFVSFR…EIVKNTFRML (166 aa). The active site involves Glu-89. In terms of domain architecture, NB-ARC spans 201 to 445; it reads ELEKLLMFDN…FLDIACFFRS (245 aa). 9 LRR repeats span residues 607–630, 653–676, 677–699, 720–743, 744–767, 769–791, 792–815, 840–862, and 863–886; these read PKELVDLSLRYSHIKQLWEDEKNT, AKNLERLDLEGCTSLDLLGSVKQM, NELIYLNLRDCTSLESLPKGFKI, SESIESLHLEGTAIERVVEHIESL, HSLILLNLKNCEKLKYLPNDLYKL, SLQELVLSGCSALESLPPIKEKM, ECLEILLMDGTSIKQTPEMSCLSN, NSFLSDLYLTNCNIDKLPDKFSS, and LRSLRCLCLSRNNIETLPESIEKL.

The protein belongs to the disease resistance TIR-NB-LRR family.

It catalyses the reaction NAD(+) + H2O = ADP-D-ribose + nicotinamide + H(+). In terms of biological role, disease resistance protein that cooperates with RPP2A to confer resistance to Hyaloperonospora parasitica isolate Cala2. The polypeptide is Disease resistance protein RPP2B (Arabidopsis thaliana (Mouse-ear cress)).